We begin with the raw amino-acid sequence, 308 residues long: Probable manganese-dependent inorganic pyrophosphatase (308 aa).

Residues His9, Asp13, Asp15, Asp75, His97, and Asp149 each contribute to the Mn(2+) site.

Belongs to the PPase class C family. Requires Mn(2+) as cofactor.

The protein localises to the cytoplasm. The catalysed reaction is diphosphate + H2O = 2 phosphate + H(+). This is Probable manganese-dependent inorganic pyrophosphatase from Listeria innocua serovar 6a (strain ATCC BAA-680 / CLIP 11262).